The following is a 386-amino-acid chain: Ferrochelatase (386 aa).

Fe cation is bound by residues His-196 and Glu-277.

Belongs to the ferrochelatase family.

It localises to the cytoplasm. The catalysed reaction is heme b + 2 H(+) = protoporphyrin IX + Fe(2+). It participates in porphyrin-containing compound metabolism; protoheme biosynthesis; protoheme from protoporphyrin-IX: step 1/1. Its function is as follows. Catalyzes the ferrous insertion into protoporphyrin IX. The chain is Ferrochelatase from Picosynechococcus sp. (strain ATCC 27264 / PCC 7002 / PR-6) (Agmenellum quadruplicatum).